The following is a 291-amino-acid chain: Porphobilinogen deaminase (291 aa).

Cysteine 237 is modified (S-(dipyrrolylmethanemethyl)cysteine).

The protein belongs to the HMBS family. As to quaternary structure, monomer. Requires dipyrromethane as cofactor.

The enzyme catalyses 4 porphobilinogen + H2O = hydroxymethylbilane + 4 NH4(+). The protein operates within porphyrin-containing compound metabolism; protoporphyrin-IX biosynthesis; coproporphyrinogen-III from 5-aminolevulinate: step 2/4. Functionally, tetrapolymerization of the monopyrrole PBG into the hydroxymethylbilane pre-uroporphyrinogen in several discrete steps. This is Porphobilinogen deaminase from Clostridium acetobutylicum (strain ATCC 824 / DSM 792 / JCM 1419 / IAM 19013 / LMG 5710 / NBRC 13948 / NRRL B-527 / VKM B-1787 / 2291 / W).